The chain runs to 212 residues: Large ribosomal subunit protein uL3 (212 aa).

The tract at residues 134-154 is disordered; that stretch reads RKTHGNSVSHRVPGSIGQNQT. Glutamine 153 is modified (N5-methylglutamine).

This sequence belongs to the universal ribosomal protein uL3 family. Part of the 50S ribosomal subunit. Forms a cluster with proteins L14 and L19. Methylated by PrmB.

Functionally, one of the primary rRNA binding proteins, it binds directly near the 3'-end of the 23S rRNA, where it nucleates assembly of the 50S subunit. This Dichelobacter nodosus (strain VCS1703A) protein is Large ribosomal subunit protein uL3.